We begin with the raw amino-acid sequence, 278 residues long: 3-methyl-2-oxobutanoate hydroxymethyltransferase (278 aa).

Mg(2+) is bound by residues D43 and D82. 3-methyl-2-oxobutanoate-binding positions include 43-44 (DS), D82, and K112. A Mg(2+)-binding site is contributed by E114. The active-site Proton acceptor is E181.

This sequence belongs to the PanB family. Homodecamer; pentamer of dimers. Mg(2+) serves as cofactor.

It localises to the cytoplasm. The catalysed reaction is 3-methyl-2-oxobutanoate + (6R)-5,10-methylene-5,6,7,8-tetrahydrofolate + H2O = 2-dehydropantoate + (6S)-5,6,7,8-tetrahydrofolate. It functions in the pathway cofactor biosynthesis; (R)-pantothenate biosynthesis; (R)-pantoate from 3-methyl-2-oxobutanoate: step 1/2. In terms of biological role, catalyzes the reversible reaction in which hydroxymethyl group from 5,10-methylenetetrahydrofolate is transferred onto alpha-ketoisovalerate to form ketopantoate. This chain is 3-methyl-2-oxobutanoate hydroxymethyltransferase, found in Bacillus cereus (strain G9842).